We begin with the raw amino-acid sequence, 350 residues long: tRNA uridine(34) hydroxylase (350 aa).

A Rhodanese domain is found at 146-240 (DDPDAVFIDM…YARRAREQGL (95 aa)). The active-site Cysteine persulfide intermediate is the C200. Positions 319 to 328 (RRRRAGRENG) are enriched in basic and acidic residues. The segment at 319 to 350 (RRRRAGRENGNKIFNKSRGRLNSKLSIPDPAE) is disordered.

This sequence belongs to the TrhO family.

The catalysed reaction is uridine(34) in tRNA + AH2 + O2 = 5-hydroxyuridine(34) in tRNA + A + H2O. Catalyzes oxygen-dependent 5-hydroxyuridine (ho5U) modification at position 34 in tRNAs. The polypeptide is tRNA uridine(34) hydroxylase (Salmonella typhi).